The primary structure comprises 85 residues: Large ribosomal subunit protein bL31B (85 aa).

The protein belongs to the bacterial ribosomal protein bL31 family. Type B subfamily. As to quaternary structure, part of the 50S ribosomal subunit.

This is Large ribosomal subunit protein bL31B from Bifidobacterium longum subsp. infantis (strain ATCC 15697 / DSM 20088 / JCM 1222 / NCTC 11817 / S12).